We begin with the raw amino-acid sequence, 360 residues long: Dual-specificity RNA methyltransferase RlmN (360 aa).

Glutamate 89 serves as the catalytic Proton acceptor. One can recognise a Radical SAM core domain in the interval 95–330 (DSGRGTLCVS…TRVTRGQDID (236 aa)). Cysteine 102 and cysteine 333 form a disulfide bridge. [4Fe-4S] cluster is bound by residues cysteine 109, cysteine 113, and cysteine 116. Residues 159-160 (GE), serine 191, 213-215 (SLH), and asparagine 290 each bind S-adenosyl-L-methionine. Cysteine 333 serves as the catalytic S-methylcysteine intermediate.

This sequence belongs to the radical SAM superfamily. RlmN family. It depends on [4Fe-4S] cluster as a cofactor.

Its subcellular location is the cytoplasm. The enzyme catalyses adenosine(2503) in 23S rRNA + 2 reduced [2Fe-2S]-[ferredoxin] + 2 S-adenosyl-L-methionine = 2-methyladenosine(2503) in 23S rRNA + 5'-deoxyadenosine + L-methionine + 2 oxidized [2Fe-2S]-[ferredoxin] + S-adenosyl-L-homocysteine. It carries out the reaction adenosine(37) in tRNA + 2 reduced [2Fe-2S]-[ferredoxin] + 2 S-adenosyl-L-methionine = 2-methyladenosine(37) in tRNA + 5'-deoxyadenosine + L-methionine + 2 oxidized [2Fe-2S]-[ferredoxin] + S-adenosyl-L-homocysteine. Specifically methylates position 2 of adenine 2503 in 23S rRNA and position 2 of adenine 37 in tRNAs. m2A2503 modification seems to play a crucial role in the proofreading step occurring at the peptidyl transferase center and thus would serve to optimize ribosomal fidelity. This Alkalilimnicola ehrlichii (strain ATCC BAA-1101 / DSM 17681 / MLHE-1) protein is Dual-specificity RNA methyltransferase RlmN.